Reading from the N-terminus, the 256-residue chain is Phosphatidylglycerol--prolipoprotein diacylglyceryl transferase (256 aa).

Helical transmembrane passes span 19–39, 56–76, and 91–111; these read VHWYGLMYLIGFIGAWLLGYW, LIFYSALGVILGGRVGYMLFY, and IWEGGMSFHGGLLGVVIAAWL. Residue Arg139 participates in a 1,2-diacyl-sn-glycero-3-phospho-(1'-sn-glycerol) binding. The chain crosses the membrane as a helical span at residues 231-251; sequence FGWLTMGQVLSIPMLLIGIWL.

Belongs to the Lgt family.

It is found in the cell inner membrane. It catalyses the reaction L-cysteinyl-[prolipoprotein] + a 1,2-diacyl-sn-glycero-3-phospho-(1'-sn-glycerol) = an S-1,2-diacyl-sn-glyceryl-L-cysteinyl-[prolipoprotein] + sn-glycerol 1-phosphate + H(+). It functions in the pathway protein modification; lipoprotein biosynthesis (diacylglyceryl transfer). In terms of biological role, catalyzes the transfer of the diacylglyceryl group from phosphatidylglycerol to the sulfhydryl group of the N-terminal cysteine of a prolipoprotein, the first step in the formation of mature lipoproteins. This is Phosphatidylglycerol--prolipoprotein diacylglyceryl transferase from Legionella pneumophila (strain Corby).